The chain runs to 566 residues: Transcription factor opdL (566 aa).

Positions 15-45 (CATCARAKCRCVPRNGGRGRCERCHHLNKEC) form a DNA-binding region, zn(2)-C6 fungal-type.

It localises to the nucleus. Functionally, transcription factor; part of the gene cluster that mediates the biosynthesis of oxopyrrolidines, polyketide-amino acid hybrid compounds with feature structures of tetramic acid. The polypeptide is Transcription factor opdL (Penicillium oxalicum (strain 114-2 / CGMCC 5302) (Penicillium decumbens)).